The primary structure comprises 28 residues: Putative GDSL-motif lipase/hydrolase-like protein (28 aa).

The protein belongs to the 'GDSL' lipolytic enzyme family.

The protein is Putative GDSL-motif lipase/hydrolase-like protein of Populus euphratica (Euphrates poplar).